Consider the following 132-residue polypeptide: Small ribosomal subunit protein uS8 (132 aa).

It belongs to the universal ribosomal protein uS8 family. Part of the 30S ribosomal subunit. Contacts proteins S5 and S12.

Its function is as follows. One of the primary rRNA binding proteins, it binds directly to 16S rRNA central domain where it helps coordinate assembly of the platform of the 30S subunit. In Cereibacter sphaeroides (strain ATCC 17025 / ATH 2.4.3) (Rhodobacter sphaeroides), this protein is Small ribosomal subunit protein uS8.